A 658-amino-acid polypeptide reads, in one-letter code: Methionine--tRNA ligase (658 aa).

The 'HIGH' region signature appears at Pro-9–His-19. Zn(2+) is bound by residues Cys-140, Cys-143, Cys-152, and Cys-156. The short motif at Thr-322–Ser-326 is the 'KMSKS' region element. Lys-325 contacts ATP. A tRNA-binding domain is found at Asp-558–Cys-658.

It belongs to the class-I aminoacyl-tRNA synthetase family. MetG type 1 subfamily. Homodimer. The cofactor is Zn(2+).

The protein localises to the cytoplasm. It carries out the reaction tRNA(Met) + L-methionine + ATP = L-methionyl-tRNA(Met) + AMP + diphosphate. Its function is as follows. Is required not only for elongation of protein synthesis but also for the initiation of all mRNA translation through initiator tRNA(fMet) aminoacylation. The polypeptide is Methionine--tRNA ligase (Archaeoglobus fulgidus (strain ATCC 49558 / DSM 4304 / JCM 9628 / NBRC 100126 / VC-16)).